The chain runs to 291 residues: Elongation factor Ts (291 aa).

The tract at residues 79–82 is involved in Mg(2+) ion dislocation from EF-Tu; the sequence is TDFV.

This sequence belongs to the EF-Ts family.

It localises to the cytoplasm. Associates with the EF-Tu.GDP complex and induces the exchange of GDP to GTP. It remains bound to the aminoacyl-tRNA.EF-Tu.GTP complex up to the GTP hydrolysis stage on the ribosome. In Roseobacter denitrificans (strain ATCC 33942 / OCh 114) (Erythrobacter sp. (strain OCh 114)), this protein is Elongation factor Ts.